We begin with the raw amino-acid sequence, 220 residues long: uncharacterized protein (220 aa).

The N-terminal stretch at 1–25 (MSCGTYKRGSLTFLLVVALAVPVFC) is a signal peptide.

As to expression, nacreous layer of shell (at protein level). Expressed primarily in the mantle with highest level in the mantle pallium and lower level in the mantle edge.

It localises to the secreted. This is an uncharacterized protein from Margaritifera margaritifera (Freshwater pearl mussel).